We begin with the raw amino-acid sequence, 1004 residues long: Caspase recruitment domain-containing protein 14 (1004 aa).

The 93-residue stretch at 15–107 folds into the CARD domain; sequence DEETLWEMME…DVYTLVTGLQ (93 aa). Residues 128 to 409 adopt a coiled-coil conformation; it reads LAGAIGSLQE…RTQLRQLQAE (282 aa). The maintains the protein in an inactive state stretch occupies residues 409-568; it reads EPPGVLKQEA…RRPARRILSQ (160 aa). Ser-544 bears the Phosphoserine mark. The region spanning 568–658 is the PDZ domain; sequence QVTMLAFQGD…FCCLSVKVNT (91 aa). The 184-residue stretch at 807 to 990 folds into the Guanylate kinase-like domain; it reads AESCLTLVPY…LLSCVRQAIA (184 aa).

Interacts (via CARD domain) with BCL10 (via CARD domain). Forms a complex with MALT1 and BCL10; resulting in the formation of a CBM (CARD14-BLC10-MALT1) complex. Interacts with TRAF2, TRAF3 and TRAF6. Isoform 1 is detected in placenta and epidermal keratinocytes. Isoform 2 is detected in leukocytes and fetal brain.

It is found in the cytoplasm. Acts as a scaffolding protein that can activate the inflammatory transcription factor NF-kappa-B and p38/JNK MAP kinase signaling pathways. Forms a signaling complex with BCL10 and MALT1, and activates MALT1 proteolytic activity and inflammatory gene expression. MALT1 is indispensable for CARD14-induced activation of NF-kappa-B and p38/JNK MAP kinases. May play a role in signaling mediated by TRAF2, TRAF3 and TRAF6 and protects cells against apoptosis. Its function is as follows. Not able to activate the inflammatory transcription factor NF-kappa-B and may function as a dominant negative regulator. This chain is Caspase recruitment domain-containing protein 14 (CARD14), found in Homo sapiens (Human).